We begin with the raw amino-acid sequence, 80 residues long: ATP synthase subunit c (80 aa).

Helical transmembrane passes span 11–31 (IAAA…IGIL) and 53–73 (FFIV…LGLY).

Belongs to the ATPase C chain family. In terms of assembly, F-type ATPases have 2 components, F(1) - the catalytic core - and F(0) - the membrane proton channel. F(1) has five subunits: alpha(3), beta(3), gamma(1), delta(1), epsilon(1). F(0) has three main subunits: a(1), b(2) and c(10-14). The alpha and beta chains form an alternating ring which encloses part of the gamma chain. F(1) is attached to F(0) by a central stalk formed by the gamma and epsilon chains, while a peripheral stalk is formed by the delta and b chains.

It localises to the cell inner membrane. F(1)F(0) ATP synthase produces ATP from ADP in the presence of a proton or sodium gradient. F-type ATPases consist of two structural domains, F(1) containing the extramembraneous catalytic core and F(0) containing the membrane proton channel, linked together by a central stalk and a peripheral stalk. During catalysis, ATP synthesis in the catalytic domain of F(1) is coupled via a rotary mechanism of the central stalk subunits to proton translocation. Functionally, key component of the F(0) channel; it plays a direct role in translocation across the membrane. A homomeric c-ring of between 10-14 subunits forms the central stalk rotor element with the F(1) delta and epsilon subunits. This chain is ATP synthase subunit c, found in Aeromonas hydrophila subsp. hydrophila (strain ATCC 7966 / DSM 30187 / BCRC 13018 / CCUG 14551 / JCM 1027 / KCTC 2358 / NCIMB 9240 / NCTC 8049).